The sequence spans 290 residues: Acetyl-coenzyme A carboxylase carboxyl transferase subunit beta (290 aa).

Residues 29–290 (LWGKCPECSQ…RLHGYREKRK (262 aa)) enclose the CoA carboxyltransferase N-terminal domain. Cysteine 33, cysteine 36, cysteine 52, and cysteine 55 together coordinate Zn(2+). Residues 33 to 55 (CPECSQVVYRKDLLENANVCSNC) form a C4-type zinc finger.

Belongs to the AccD/PCCB family. Acetyl-CoA carboxylase is a heterohexamer composed of biotin carboxyl carrier protein (AccB), biotin carboxylase (AccC) and two subunits each of ACCase subunit alpha (AccA) and ACCase subunit beta (AccD). Requires Zn(2+) as cofactor.

The protein resides in the cytoplasm. It carries out the reaction N(6)-carboxybiotinyl-L-lysyl-[protein] + acetyl-CoA = N(6)-biotinyl-L-lysyl-[protein] + malonyl-CoA. Its pathway is lipid metabolism; malonyl-CoA biosynthesis; malonyl-CoA from acetyl-CoA: step 1/1. Functionally, component of the acetyl coenzyme A carboxylase (ACC) complex. Biotin carboxylase (BC) catalyzes the carboxylation of biotin on its carrier protein (BCCP) and then the CO(2) group is transferred by the transcarboxylase to acetyl-CoA to form malonyl-CoA. This chain is Acetyl-coenzyme A carboxylase carboxyl transferase subunit beta, found in Prochlorococcus marinus (strain MIT 9211).